We begin with the raw amino-acid sequence, 549 residues long: Cytoplasmic trehalase (549 aa).

Substrate-binding positions include R168, 175–176 (WD), N212, 221–223 (RSQ), 292–294 (RDE), and G324. Catalysis depends on proton donor/acceptor residues D326 and E509. E525 is a binding site for substrate.

It belongs to the glycosyl hydrolase 37 family. Monomer.

It localises to the cytoplasm. The enzyme catalyses alpha,alpha-trehalose + H2O = alpha-D-glucose + beta-D-glucose. It participates in glycan degradation; trehalose degradation; D-glucose from alpha,alpha-trehalose: step 1/1. In terms of biological role, hydrolyzes trehalose to glucose. Could be involved, in cells returning to low osmolarity conditions, in the utilization of the accumulated cytoplasmic trehalose, which was synthesized in response to high osmolarity. This chain is Cytoplasmic trehalase, found in Escherichia coli O127:H6 (strain E2348/69 / EPEC).